Here is a 479-residue protein sequence, read N- to C-terminus: Ribosomal RNA small subunit methyltransferase F (479 aa).

Residues 125-131 (AAAPGSK), Glu-149, Asp-176, and Asp-194 each bind S-adenosyl-L-methionine. Cys-247 acts as the Nucleophile in catalysis.

The protein belongs to the class I-like SAM-binding methyltransferase superfamily. RsmB/NOP family.

It is found in the cytoplasm. It carries out the reaction cytidine(1407) in 16S rRNA + S-adenosyl-L-methionine = 5-methylcytidine(1407) in 16S rRNA + S-adenosyl-L-homocysteine + H(+). In terms of biological role, specifically methylates the cytosine at position 1407 (m5C1407) of 16S rRNA. This is Ribosomal RNA small subunit methyltransferase F from Citrobacter koseri (strain ATCC BAA-895 / CDC 4225-83 / SGSC4696).